Consider the following 532-residue polypeptide: T-complex protein 1 subunit beta (532 aa).

It belongs to the TCP-1 chaperonin family. Heterooligomeric complex of about 850 to 900 kDa that forms two stacked rings, 12 to 16 nm in diameter.

The protein localises to the cytoplasm. Molecular chaperone; assists the folding of proteins upon ATP hydrolysis. Known to play a role, in vitro, in the folding of actin and tubulin. This chain is T-complex protein 1 subunit beta (cct2), found in Dictyostelium discoideum (Social amoeba).